We begin with the raw amino-acid sequence, 656 residues long: NADH-ubiquinone oxidoreductase chain 5 (656 aa).

17 helical membrane-spanning segments follow: residues 4–21 (TLII…FFGR), 28–50 (AHLI…FFEV), 81–103 (LTVS…SISY), 112–129 (RFFS…ILVT), 133–155 (YLIM…NFWF), 176–198 (TLLT…STVF), 208–230 (IITI…VGLH), 243–262 (VSAL…LLMR), 272–294 (TVLV…IGLF), 301–319 (VIAY…AVGL), 329–351 (LVNH…HAVA), 364–386 (EFLP…VPFM), 409–431 (IVYF…VLYL), 452–471 (LFMT…FGYL), 514–536 (FVFT…KLLI), 603–625 (SLGN…GLIF), and 629–651 (LLYF…FALL).

Belongs to the complex I subunit 5 family.

The protein resides in the mitochondrion inner membrane. It carries out the reaction a ubiquinone + NADH + 5 H(+)(in) = a ubiquinol + NAD(+) + 4 H(+)(out). Core subunit of the mitochondrial membrane respiratory chain NADH dehydrogenase (Complex I) that is believed to belong to the minimal assembly required for catalysis. Complex I functions in the transfer of electrons from NADH to the respiratory chain. The immediate electron acceptor for the enzyme is believed to be ubiquinone. The protein is NADH-ubiquinone oxidoreductase chain 5 (nad5) of Aspergillus niger.